The chain runs to 351 residues: MDLVLEFCDSYFFDYVYATLLPASLSPKMGGTWQQAMIKEQMVNATRVFGRSLERPLEVYGYAPFMFEVSPHAFGSVLPRYSLLRQSLSLFLVTTVFGWLLYLIVASFSYVFVFDKSVFNHPRYLKNQMSMEIKQGLGAIPYMAVMTVPWFLLELHGYSHLYMGLELNVRGYVRLALEALFFILFTDFGIYLLHRWLHWPAVYKVLHKKHHKWLVCTPFASHAFHPIDGYLQSLPYHLFPMLFPLHKVSYLVLFTFVNVWTVMIHDGEYLSNDPVINGAACHTVHHLYFNYNYGQFTTLWDRLGGSYREPDHELFDSNLKKDKAVWEQQIKEVDEMIKNVEGPADDRVYER.

The next 3 helical transmembrane spans lie at 88–108, 136–156, and 173–193; these read LSLF…VASF, GLGA…LELH, and VRLA…IYLL. The Fatty acid hydroxylase domain occupies 180-305; it reads LFFILFTDFG…FTTLWDRLGG (126 aa). The Histidine box-1 signature appears at 194 to 198; the sequence is HRWLH. The short motif at 207–211 is the Histidine box-2 element; the sequence is HKKHH. The chain crosses the membrane as a helical span at residues 237-257; the sequence is HLFPMLFPLHKVSYLVLFTFV. The short motif at 282–286 is the Histidine box-3 element; that stretch reads HTVHH.

It belongs to the sterol desaturase family. The cofactor is Fe cation.

Its subcellular location is the endoplasmic reticulum membrane. It catalyses the reaction a Delta(7)-sterol + 2 Fe(II)-[cytochrome b5] + O2 + 2 H(+) = a Delta(5),Delta(7)-sterol + 2 Fe(III)-[cytochrome b5] + 2 H2O. It participates in steroid metabolism; ergosterol biosynthesis; ergosterol from zymosterol: step 3/5. Its function is as follows. Catalyzes the introduction of a C-5 double bond in the B ring of ergosterol. May contribute to the regulation of ergosterol biosynthesis. This chain is Delta(7)-sterol 5(6)-desaturase (ERG3), found in Eremothecium gossypii (strain ATCC 10895 / CBS 109.51 / FGSC 9923 / NRRL Y-1056) (Yeast).